The sequence spans 95 residues: Co-chaperonin GroES (95 aa).

The protein belongs to the GroES chaperonin family. Heptamer of 7 subunits arranged in a ring. Interacts with the chaperonin GroEL.

The protein localises to the cytoplasm. In terms of biological role, together with the chaperonin GroEL, plays an essential role in assisting protein folding. The GroEL-GroES system forms a nano-cage that allows encapsulation of the non-native substrate proteins and provides a physical environment optimized to promote and accelerate protein folding. GroES binds to the apical surface of the GroEL ring, thereby capping the opening of the GroEL channel. The sequence is that of Co-chaperonin GroES from Desulforapulum autotrophicum (strain ATCC 43914 / DSM 3382 / VKM B-1955 / HRM2) (Desulfobacterium autotrophicum).